A 358-amino-acid polypeptide reads, in one-letter code: Replication-associated protein (358 aa).

Residues Arg7–Phe115 form the CRESS-DNA virus Rep endonuclease domain. An RCR-1 motif is present at residues Phe14–Tyr17. 3 residues coordinate a divalent metal cation: Glu48, His56, and His58. An RCR-2 motif is present at residues His56–His58. The active-site For DNA cleavage activity is the Tyr102. Positions Tyr102–Lys105 match the RCR-3 motif. Asp106 serves as a coordination point for a divalent metal cation. The interval Lys142 to Leu152 is binding to RBR1. The interval Lys155–Pro175 is oligomerization. Residue Gly220–Thr227 coordinates ATP.

The protein belongs to the geminiviridae Rep protein family. Homooligomer. Interacts with the replication enhancer protein (REn). Interacts with host retinoblastoma-related protein 1 (RBR1), and may thereby induce the transcription of host replicative enzymes even if the cell is not dividing anymore. Interacts with host PCNA. Interacts with host SCE1 protein. It depends on Mg(2+) as a cofactor. Requires Mn(2+) as cofactor.

It localises to the host nucleus. Essential for the replication of viral ssDNA. The closed circular ssDNA genome is first converted to a superhelical dsDNA. Rep binds a specific region at the genome origin of replication. It introduces an endonucleolytic nick within the conserved sequence 5'-TAATATTAC-3' in the intergenic region of the genome present in all geminiviruses, thereby initiating the rolling circle replication (RCR). Following cleavage, binds covalently to the 5'-phosphate of DNA as a tyrosyl ester. The cleavage gives rise to a free 3'-OH that serves as a primer for the cellular DNA polymerase. The polymerase synthesizes the (+) strand DNA by rolling circle mechanism. After one round of replication, a Rep-catalyzed nucleotidyl transfer reaction releases a circular single-stranded virus genome, thereby terminating the replication. Displays origin-specific DNA cleavage, nucleotidyl transferase, ATPase and helicase activities. This Hewittia sublobata (Coralbush) protein is Replication-associated protein.